Consider the following 249-residue polypeptide: Eukaryotic translation initiation factor 3 subunit K (249 aa).

Positions 46–222 (FDCYANLALL…VKVPSNKENE (177 aa)) constitute a PCI domain.

The protein belongs to the eIF-3 subunit K family. Component of the eukaryotic translation initiation factor 3 (eIF-3) complex.

Its subcellular location is the cytoplasm. Functionally, component of the eukaryotic translation initiation factor 3 (eIF-3) complex, which is involved in protein synthesis of a specialized repertoire of mRNAs and, together with other initiation factors, stimulates binding of mRNA and methionyl-tRNAi to the 40S ribosome. The eIF-3 complex specifically targets and initiates translation of a subset of mRNAs involved in cell proliferation. This chain is Eukaryotic translation initiation factor 3 subunit K, found in Aspergillus clavatus (strain ATCC 1007 / CBS 513.65 / DSM 816 / NCTC 3887 / NRRL 1 / QM 1276 / 107).